Here is a 190-residue protein sequence, read N- to C-terminus: Peptidyl-tRNA hydrolase (190 aa).

Tyr-14 serves as a coordination point for tRNA. His-19 (proton acceptor) is an active-site residue. Residues Tyr-64 and Asn-66 each contribute to the tRNA site.

This sequence belongs to the PTH family. In terms of assembly, monomer.

The protein resides in the cytoplasm. It catalyses the reaction an N-acyl-L-alpha-aminoacyl-tRNA + H2O = an N-acyl-L-amino acid + a tRNA + H(+). In terms of biological role, hydrolyzes ribosome-free peptidyl-tRNAs (with 1 or more amino acids incorporated), which drop off the ribosome during protein synthesis, or as a result of ribosome stalling. Catalyzes the release of premature peptidyl moieties from peptidyl-tRNA molecules trapped in stalled 50S ribosomal subunits, and thus maintains levels of free tRNAs and 50S ribosomes. This is Peptidyl-tRNA hydrolase from Rhodopirellula baltica (strain DSM 10527 / NCIMB 13988 / SH1).